The following is a 1298-amino-acid chain: Phosphoribosylformylglycinamidine synthase (1298 aa).

The disordered stretch occupies residues 303 to 327 (FPGAATGSGGEIRDEGATGRGAKPK). ATP-binding positions include 305–316 (GAATGSGGEIRD), 384–386 (TGY), and Ala676. Mg(2+) is bound by residues Asp677, Glu716, Asn720, and Asp884. Ser886 is an ATP binding site. The Glutamine amidotransferase type-1 domain occupies 1045-1298 (VAVLREQGVN…MFRNARAWVN (254 aa)). Cys1138 (nucleophile) is an active-site residue. Residues His1263 and Glu1265 contribute to the active site.

The protein in the N-terminal section; belongs to the FGAMS family. Monomer.

It is found in the cytoplasm. The catalysed reaction is N(2)-formyl-N(1)-(5-phospho-beta-D-ribosyl)glycinamide + L-glutamine + ATP + H2O = 2-formamido-N(1)-(5-O-phospho-beta-D-ribosyl)acetamidine + L-glutamate + ADP + phosphate + H(+). It participates in purine metabolism; IMP biosynthesis via de novo pathway; 5-amino-1-(5-phospho-D-ribosyl)imidazole from N(2)-formyl-N(1)-(5-phospho-D-ribosyl)glycinamide: step 1/2. Functionally, phosphoribosylformylglycinamidine synthase involved in the purines biosynthetic pathway. Catalyzes the ATP-dependent conversion of formylglycinamide ribonucleotide (FGAR) and glutamine to yield formylglycinamidine ribonucleotide (FGAM) and glutamate. In Pseudomonas syringae pv. tomato (strain ATCC BAA-871 / DC3000), this protein is Phosphoribosylformylglycinamidine synthase.